A 314-amino-acid polypeptide reads, in one-letter code: ATP synthase gamma chain (314 aa).

It belongs to the ATPase gamma chain family. In terms of assembly, F-type ATPases have 2 components, CF(1) - the catalytic core - and CF(0) - the membrane proton channel. CF(1) has five subunits: alpha(3), beta(3), gamma(1), delta(1), epsilon(1). CF(0) has three main subunits: a, b and c.

It is found in the cell membrane. Functionally, produces ATP from ADP in the presence of a proton gradient across the membrane. The gamma chain is believed to be important in regulating ATPase activity and the flow of protons through the CF(0) complex. This is ATP synthase gamma chain from Cutibacterium acnes (strain DSM 16379 / KPA171202) (Propionibacterium acnes).